A 115-amino-acid polypeptide reads, in one-letter code: NADH-ubiquinone oxidoreductase chain 3 (115 aa).

Helical transmembrane passes span 3-23 (FVLA…ITFW), 55-75 (FFLV…LLPL), and 84-104 (LPLM…GLTY).

Belongs to the complex I subunit 3 family. Core subunit of respiratory chain NADH dehydrogenase (Complex I) which is composed of 45 different subunits. Interacts with TMEM186. Interacts with TMEM242.

It is found in the mitochondrion inner membrane. The catalysed reaction is a ubiquinone + NADH + 5 H(+)(in) = a ubiquinol + NAD(+) + 4 H(+)(out). Its function is as follows. Core subunit of the mitochondrial membrane respiratory chain NADH dehydrogenase (Complex I) which catalyzes electron transfer from NADH through the respiratory chain, using ubiquinone as an electron acceptor. Essential for the catalytic activity of complex I. The protein is NADH-ubiquinone oxidoreductase chain 3 of Pongo abelii (Sumatran orangutan).